We begin with the raw amino-acid sequence, 189 residues long: GTP cyclohydrolase 1 (189 aa).

Zn(2+) contacts are provided by C78, H81, and C150.

It belongs to the GTP cyclohydrolase I family. As to quaternary structure, toroid-shaped homodecamer, composed of two pentamers of five dimers.

The catalysed reaction is GTP + H2O = 7,8-dihydroneopterin 3'-triphosphate + formate + H(+). Its pathway is cofactor biosynthesis; 7,8-dihydroneopterin triphosphate biosynthesis; 7,8-dihydroneopterin triphosphate from GTP: step 1/1. This chain is GTP cyclohydrolase 1, found in Bacillus pumilus (strain SAFR-032).